We begin with the raw amino-acid sequence, 316 residues long: Ribosomal RNA small subunit methyltransferase H (316 aa).

Residues 35 to 37, aspartate 55, phenylalanine 84, aspartate 105, and glutamine 112 each bind S-adenosyl-L-methionine; that span reads SGH.

The protein belongs to the methyltransferase superfamily. RsmH family.

It localises to the cytoplasm. The enzyme catalyses cytidine(1402) in 16S rRNA + S-adenosyl-L-methionine = N(4)-methylcytidine(1402) in 16S rRNA + S-adenosyl-L-homocysteine + H(+). Its function is as follows. Specifically methylates the N4 position of cytidine in position 1402 (C1402) of 16S rRNA. This Streptococcus pyogenes serotype M6 (strain ATCC BAA-946 / MGAS10394) protein is Ribosomal RNA small subunit methyltransferase H.